Here is a 337-residue protein sequence, read N- to C-terminus: Cysteine proteinase 3 (337 aa).

Residues 1–21 (MRLSITLIFTLIVLSISFISA) form the signal peptide. A propeptide spans 22 to 120 (GNVFSHKQYQ…GLRLNRPQFK (99 aa)) (activation peptide). Intrachain disulfides connect Cys-142–Cys-185, Cys-176–Cys-219, and Cys-277–Cys-326. The active site involves Cys-145. Catalysis depends on residues His-284 and Asn-304.

Belongs to the peptidase C1 family.

The protein localises to the lysosome. The protein is Cysteine proteinase 3 (cprC) of Dictyostelium discoideum (Social amoeba).